The following is a 502-amino-acid chain: Probable malate:quinone oxidoreductase (502 aa).

The protein belongs to the MQO family. FAD serves as cofactor.

It carries out the reaction (S)-malate + a quinone = a quinol + oxaloacetate. The protein operates within carbohydrate metabolism; tricarboxylic acid cycle; oxaloacetate from (S)-malate (quinone route): step 1/1. The chain is Probable malate:quinone oxidoreductase from Parasynechococcus marenigrum (strain WH8102).